Here is a 101-residue protein sequence, read N- to C-terminus: Salivary thrombin inhibitor anophelin (101 aa).

Residues 1–21 (MASKVIVIALLCIALAAFVQG) form the signal peptide. The tract at residues 26–101 (THGEEPEYDE…SDSSSGSTEN (76 aa)) is disordered. Acidic residues predominate over residues 31-40 (PEYDEDDGAD). The tract at residues 75–78 (DPGR) is blocks active site cleft of host thrombin in a reverse direction compared to substrates. The segment covering 75 to 87 (DPGRRPEFLKQHN) has biased composition (basic and acidic residues). Polar residues predominate over residues 88-101 (NENQSDSSSGSTEN). The N-linked (GlcNAc...) asparagine glycan is linked to N90.

Belongs to the anophelin family. As to quaternary structure, interacts with human F2 (thrombin); the interaction results in thrombin inhibition.

The protein localises to the secreted. Salivary protein with anticoagulant activity that inhibits host thrombin (F2). This Anopheles stephensi (Indo-Pakistan malaria mosquito) protein is Salivary thrombin inhibitor anophelin.